The following is a 304-amino-acid chain: NuA3 HAT complex component PDP3 (304 aa).

A PWWP domain is found at 7 to 68 (TGDLVLCKVG…PSRLKELDQD (62 aa)). Residues 145–195 (KKNSISIKEDPEDNQKSNEEESKPNIKPSKKKRPTANSGGKSNSGNKKKVK) form a disordered region. Over residues 151-168 (IKEDPEDNQKSNEEESKP) the composition is skewed to basic and acidic residues.

In terms of assembly, component of the NuA3 histone acetyltransferase (HAT) complex. The NuA3 HAT complex has 2 functionally distinct forms that participate in transcription. The NuA3a HAT complex is composed of at least NTO1, SAS3, TAF14, YNG1 and EAF6. The NuA3b HAT complex contains an additional subunit, PDP3.

The protein resides in the nucleus. Its subcellular location is the cytoplasm. Functionally, histone-binding component of the NuA3b histone acetyltransferase complex. Targets the NuA3b HAT complex via histone H3K36me3 to the coding regions of actively transcribed genes to coordinate transcription elongation. Stimulates elongation by RNA polymerase II in vitro. The polypeptide is NuA3 HAT complex component PDP3 (Saccharomyces cerevisiae (strain ATCC 204508 / S288c) (Baker's yeast)).